The primary structure comprises 95 residues: Putative per-hexamer repeat protein 4 (95 aa).

This Mus musculus (Mouse) protein is Putative per-hexamer repeat protein 4 (Phxr4).